The sequence spans 1462 residues: MGQIFSRSASPIPRPPRGLAAHHWLNFLQAAYRLEPGPSSYDFHQLKKFLKIALETPVWICPINYSLLASLLPKGYPGRVNEILHILIQTQAQIPSRPAPPPPSSSTHDPPDSDPQIPPPYVEPTAPQVLPVMHPHGAPPNHRPWQMKDLQAIKQEVSQAAPGSPQFMQTIRLAVQQFDPTAKDLQDLLQYLCSSLVASLHHQQLDSLISEAETRGITGYNPLAGPLRVQANNPQQQGLRREYQQLWLAAFAALPGSAKDPSWASILQGLEEPYHAFVERLNIALDNGLPEGTPKDPILRSLAYSNANKECQKLLQARGHTNSPLGDMLRACQAWTPKDKTKVLVVQPKKPPPNQPCFRCGKAGHWSRDCTQPRPPPGPCPLCQDPTHWKRDCPRLKPTIPEPEPEEDALLLDLPADIPHPKNLHRGGGLTSPPTLQQVLPNQDPTSILPVIPLDPARRPVIKAQIDTQTSHPKTIEALLDTGADMTVLPIALFSSNTPLKNTSVLGAGGQTQDHFKLTSLPVLIRLPFRTTPIVLTSCLVDTKNNWAIIGRDALQQCQGVLYLPEAKRPPVILPIQAPAVLGLEHLPRPPEISQFPLNPERLQALQHLVRKALEAGHIEPYTGPGNNPVFPVKKANGTWRFIHDLRATNSLTIDLSSSSPGPPDLSSLPTTLAHLQTIDLKDAFFQIPLPKQFQPYFAFTVPQQCNYGPGTRYAWRVLPQGFKNSPTLFEMQLAHILQPIRQAFPQCTILQYMDDILLASPSHADLQLLSEATMASLISHGLPVSENKTQQTPGTIKFLGQIISPNHLTYDAVPKVPIRSRWALPELQALLGEIQWVSKGTPTLRQPLHSLYCALQRHTDPRDQIYLNPSQVQSLVQLRQALSQNCRSRLVQTLPLLGAIMLTLTGTTTVVFQSKQQWPLVWLHAPLPHTSQCPWGQLLASAVLLLDKYTLQSYGLLCQTIHHNISTQTFNQFIQTSDHPSVPILLHHSHRFKNLGAQTGELWNTFLKTTAPLAPVKALMPVFTLSPVIINTAPCLFSDGSTSQAAYILWDKHILSQRSFPLPPPHKSAQRAELLGLLHGLSSARSWRCLNIFLDSKYLYHYLRTLALGTFQGRSSQAPFQALLPRLLSRKVVYLHHVRSHTNLPDPISRLNALTDALLITPVLQLSPADLHSFTHCGQTALTLQGATTTEASNILRSCHACRKNNPQHQMPQGHIRRGLLPNHIWQGDITHFKYKNTLYRLHVWVDTFSGAISATQKRKETSSEAISSLLQAIAYLGKPSYINTDNGPAYISQDFLNMCTSLAIRHTTHVPYNPTSSGLVERSNGILKTLLYKYFTDKPDLPMDNALSIALWTINHLNVLTNCHKTRWQLHHSPRLQPIPETHSLSNKQTHWYYFKLPGLNSRQWKGPQEALQEAAGAALIPVSASSAQWIPWRLLKRAACPRPVGGPADPKEKDHQHHG.

Residue G2 is the site of N-myristoyl glycine; by host attachment. A disordered region spans residues 93–142; that stretch reads QIPSRPAPPPPSSSTHDPPDSDPQIPPPYVEPTAPQVLPVMHPHGAPPNH. Residue S105 is modified to Phosphoserine; by host MAPK1. The PPXY motif motif lies at 118-121; that stretch reads PPPY. The PTAP/PSAP motif motif lies at 124–127; sequence PTAP. CCHC-type zinc fingers lie at residues 355–372 and 378–395; these read QPCF…DCTQ and GPCP…DCPR. In terms of domain architecture, Peptidase A2 spans 476–554; the sequence is IEALLDTGAD…NNWAIIGRDA (79 aa). D481 (protease; shared with dimeric partner) is an active-site residue. The Reverse transcriptase domain occupies 614 to 804; sequence LEAGHIEPYT…GTIKFLGQII (191 aa). Residues D680, D755, D756, D1040, E1074, D1096, D1157, D1230, and D1287 each contribute to the Mg(2+) site. The RNase H type-1 domain maps to 1031–1165; sequence INTAPCLFSD…TDALLITPVL (135 aa). One can recognise an Integrase catalytic domain in the interval 1219 to 1388; it reads RGLLPNHIWQ…QPIPETHSLS (170 aa). A DNA-binding region (integrase-type) is located at residues 1393-1443; it reads HWYYFKLPGLNSRQWKGPQEALQEAAGAALIPVSASSAQWIPWRLLKRAAC.

In terms of assembly, homodimer; the homodimers are part of the immature particles. Interacts with human TSG101 and NEDD4; these interactions are essential for budding and release of viral particles. Homodimer; further assembles as homohexamers. Mg(2+) serves as cofactor. In terms of processing, phosphorylation of the matrix protein p19 by MAPK1 seems to play a role in budding. Myristoylated. Myristoylation of the matrix (MA) domain mediates the transport and binding of Gag polyproteins to the host plasma membrane and is required for the assembly of viral particles. Post-translationally, specific enzymatic cleavages by the viral protease yield mature proteins. The polyprotein is cleaved during and after budding, this process is termed maturation. The protease is autoproteolytically processed at its N- and C-termini.

Its subcellular location is the virion. It carries out the reaction Endonucleolytic cleavage to 5'-phosphomonoester.. It catalyses the reaction DNA(n) + a 2'-deoxyribonucleoside 5'-triphosphate = DNA(n+1) + diphosphate. The matrix domain targets Gag, Gag-Pro and Gag-Pro-Pol polyproteins to the plasma membrane via a multipartite membrane binding signal, that includes its myristoylated N-terminus. In terms of biological role, matrix protein. Functionally, forms the spherical core of the virus that encapsulates the genomic RNA-nucleocapsid complex. Its function is as follows. Binds strongly to viral nucleic acids and promote their aggregation. Also destabilizes the nucleic acids duplexes via highly structured zinc-binding motifs. The aspartyl protease mediates proteolytic cleavages of Gag and Gag-Pol polyproteins during or shortly after the release of the virion from the plasma membrane. Cleavages take place as an ordered, step-wise cascade to yield mature proteins. This process is called maturation. Displays maximal activity during the budding process just prior to particle release from the cell (Potential). Cleaves the translation initiation factor eIF4G leading to the inhibition of host cap-dependent translation. In terms of biological role, RT is a multifunctional enzyme that converts the viral RNA genome into dsDNA in the cytoplasm, shortly after virus entry into the cell. This enzyme displays a DNA polymerase activity that can copy either DNA or RNA templates, and a ribonuclease H (RNase H) activity that cleaves the RNA strand of RNA-DNA heteroduplexes in a partially processive 3' to 5'-endonucleasic mode. Conversion of viral genomic RNA into dsDNA requires many steps. A tRNA-Pro binds to the primer-binding site (PBS) situated at the 5'-end of the viral RNA. RT uses the 3' end of the tRNA primer to perform a short round of RNA-dependent minus-strand DNA synthesis. The reading proceeds through the U5 region and ends after the repeated (R) region which is present at both ends of viral RNA. The portion of the RNA-DNA heteroduplex is digested by the RNase H, resulting in a ssDNA product attached to the tRNA primer. This ssDNA/tRNA hybridizes with the identical R region situated at the 3' end of viral RNA. This template exchange, known as minus-strand DNA strong stop transfer, can be either intra- or intermolecular. RT uses the 3' end of this newly synthesized short ssDNA to perform the RNA-dependent minus-strand DNA synthesis of the whole template. RNase H digests the RNA template except for a polypurine tract (PPT) situated at the 5' end of the genome. It is not clear if both polymerase and RNase H activities are simultaneous. RNase H probably can proceed both in a polymerase-dependent (RNA cut into small fragments by the same RT performing DNA synthesis) and a polymerase-independent mode (cleavage of remaining RNA fragments by free RTs). Secondly, RT performs DNA-directed plus-strand DNA synthesis using the PPT that has not been removed by RNase H as primer. PPT and tRNA primers are then removed by RNase H. The 3' and 5' ssDNA PBS regions hybridize to form a circular dsDNA intermediate. Strand displacement synthesis by RT to the PBS and PPT ends produces a blunt ended, linear dsDNA copy of the viral genome that includes long terminal repeats (LTRs) at both ends. Functionally, catalyzes viral DNA integration into the host chromosome, by performing a series of DNA cutting and joining reactions. This is Gag-Pro-Pol polyprotein (gag-pro-pol) from Human T-cell leukemia virus 1 (isolate Caribbea HS-35 subtype A) (HTLV-1).